An 81-amino-acid chain; its full sequence is Large ribosomal subunit protein bL31B (81 aa).

This sequence belongs to the bacterial ribosomal protein bL31 family. Type B subfamily. As to quaternary structure, part of the 50S ribosomal subunit.

The sequence is that of Large ribosomal subunit protein bL31B from Limosilactobacillus fermentum (strain NBRC 3956 / LMG 18251) (Lactobacillus fermentum).